We begin with the raw amino-acid sequence, 368 residues long: 4-hydroxy-3-methylbut-2-en-1-yl diphosphate synthase (flavodoxin) (368 aa).

Cysteine 268, cysteine 271, cysteine 303, and glutamate 310 together coordinate [4Fe-4S] cluster.

Belongs to the IspG family. Requires [4Fe-4S] cluster as cofactor.

The catalysed reaction is (2E)-4-hydroxy-3-methylbut-2-enyl diphosphate + oxidized [flavodoxin] + H2O + 2 H(+) = 2-C-methyl-D-erythritol 2,4-cyclic diphosphate + reduced [flavodoxin]. The protein operates within isoprenoid biosynthesis; isopentenyl diphosphate biosynthesis via DXP pathway; isopentenyl diphosphate from 1-deoxy-D-xylulose 5-phosphate: step 5/6. Functionally, converts 2C-methyl-D-erythritol 2,4-cyclodiphosphate (ME-2,4cPP) into 1-hydroxy-2-methyl-2-(E)-butenyl 4-diphosphate. The polypeptide is 4-hydroxy-3-methylbut-2-en-1-yl diphosphate synthase (flavodoxin) (Bacillus cytotoxicus (strain DSM 22905 / CIP 110041 / 391-98 / NVH 391-98)).